Here is an 879-residue protein sequence, read N- to C-terminus: Levansucrase (879 aa).

The signal sequence occupies residues 1-37 (MTKEHKKMYKAGKYWAVATLVSASILMEVGVTTHADA). 7 repeat units span residues 66 to 81 (DNAT…SIAN), 82 to 97 (DNAT…SIAN), 98 to 113 (DNAT…SIAN), 114 to 129 (DNAT…SVAN), 130 to 145 (DNAT…SVAN), 146 to 161 (DNAT…SVAN), and 162 to 177 (DNAT…SVAN). A 7 X 16 AA tandem repeats of D-N-A-T-S-G-S-T-K-Q-E-S-S-[IV]-A-N region spans residues 66–177 (DNATSGSTKQ…STKQESSVAN (112 aa)). Composition is skewed to polar residues over residues 66–180 (DNAT…NDTK) and 189–213 (NTSN…AATQ). A disordered region spans residues 66–213 (DNATSGSTKQ…NNEQPSAATQ (148 aa)). Sucrose is bound by residues Trp311, Asp312, and Ser382. The Nucleophile role is filled by Asp312. Asp460 serves as a coordination point for Ca(2+). Sucrose contacts are provided by Arg465 and Asp466. Residues Gln491, Leu528, Asn530, and Asp562 each coordinate Ca(2+). Glu563 lines the sucrose pocket. The active-site Proton donor/acceptor is the Glu565. Arg583 serves as a coordination point for sucrose. The interval 743–830 (SSGLGLKPHQ…TPAKPVQAGQ (88 aa)) is disordered. Residues 754–821 (VNPSQPTTPA…KPVNPSQPTT (68 aa)) show a composition bias toward polar residues. Positions 841 to 845 (LPQTG) match the LPXTG sorting signal motif. Pentaglycyl murein peptidoglycan amidated threonine is present on Thr844. Positions 845–879 (GENNSQSQTMSFIGILLAMFGSLLGFLGIKKRRND) are cleaved as a propeptide — removed by sortase.

It belongs to the glycosyl hydrolase 68 family.

It is found in the secreted. The protein resides in the cell wall. It catalyses the reaction [6)-beta-D-fructofuranosyl-(2-&gt;](n) alpha-D-glucopyranoside + sucrose = [6)-beta-D-fructofuranosyl-(2-&gt;](n+1) alpha-D-glucopyranoside + D-glucose. With respect to regulation, ca(2+) may play an important structural role and promote stability of levansucrase. In terms of biological role, fructosyltransferase that catalyzes the polymerization of the fructose moiety of sucrose to produce levan polymer and the fructo-oligosaccharide (FOS) 1-kestose. Also displays sucrose hydrolase activity. The sequence is that of Levansucrase from Fructilactobacillus sanfranciscensis (Lactobacillus sanfranciscensis).